Here is a 418-residue protein sequence, read N- to C-terminus: Neurotensin receptor type 1 (418 aa).

At 1–67 the chain is on the extracellular side; that stretch reads MRLNSSAPGT…TDIYSKVLVT (67 aa). N-linked (GlcNAc...) asparagine glycosylation is found at N4, N37, and N41. Residues 68-88 traverse the membrane as a helical segment; that stretch reads AVYLALFVVGTVGNTVTAFTL. Over 89 to 102 the chain is Cytoplasmic; the sequence is ARKKSLQSLQSTVH. The chain crosses the membrane as a helical span at residues 103-122; the sequence is YHLGSLALSDLLTLLLAMPV. Residues 123–142 are Extracellular-facing; that stretch reads ELYNFIWVHHPWAFGDAGCR. A disulfide bridge links C141 with C224. Residues 143 to 164 traverse the membrane as a helical segment; that stretch reads GYYFLRDACTYATALNVASLSV. Residues 165–184 are Cytoplasmic-facing; it reads ERYLAICHPFKAKTLMSRSR. The chain crosses the membrane as a helical span at residues 185–205; the sequence is TKKFISAIWLASALLAVPMLF. Residues 206 to 234 are Extracellular-facing; sequence TMGEQNRSADGQHAGGLVCTPTIHTATVK. A helical transmembrane segment spans residues 235–259; it reads VVIQVNTFMSFIFPMVVISVLNTII. Over 260 to 303 the chain is Cytoplasmic; it reads ANKLTVMVRQAAEQGQVCTVGGEHSTFSMAIEPGRVQALRHGVR. A helical transmembrane segment spans residues 304–325; it reads VLRAVVIAFVVCWLPYHVRRLM. Residues 321-344 are neurotensin binding; it reads VRRLMFCYISDEQWTPFLYDFYHY. The Extracellular segment spans residues 326-343; sequence FCYISDEQWTPFLYDFYH. Residues 344–364 traverse the membrane as a helical segment; it reads YFYMVTNALFYVSSTINPILY. Over 365 to 418 the chain is Cytoplasmic; it reads NLVSANFRHIFLATLACLCPVWRRRRKRPAFSRKADSVSSNHTLSSNATRETLY. 2 S-palmitoyl cysteine lipidation sites follow: C381 and C383.

It belongs to the G-protein coupled receptor 1 family. Neurotensin receptor subfamily. NTSR1 sub-subfamily. In terms of assembly, interacts (palmitoylated form) with GNA11. N-glycosylated. In terms of processing, palmitoylated; this is required for normal localization at membrane rafts and normal GNA11-mediated activation of down-stream signaling cascades. The palmitoylation level increases in response to neurotensin treatment. In terms of tissue distribution, expressed in prostate (at protein level). Detected in colon and peripheral blood mononuclear cells. Detected at very low levels in brain.

The protein resides in the cell membrane. It localises to the membrane raft. Its function is as follows. G-protein coupled receptor for the tridecapeptide neurotensin (NTS). Signaling is effected via G proteins that activate a phosphatidylinositol-calcium second messenger system. Signaling leads to the activation of downstream MAP kinases and protects cells against apoptosis. This Homo sapiens (Human) protein is Neurotensin receptor type 1 (NTSR1).